The primary structure comprises 178 residues: Caveolin-1 (178 aa).

Position 2 is an N-acetylserine (Ser2). Phosphoserine is present on Ser2. The required for homooligomerization stretch occupies residues 2–94 (SGGKYVDSEG…WKASFTTFTV (93 aa)). At 2–104 (SGGKYVDSEG…TKYWFYRLLS (103 aa)) the chain is on the cytoplasmic side. Lys5 carries the N6-acetyllysine; alternate modification. Residue Lys5 forms a Glycyl lysine isopeptide (Lys-Gly) (interchain with G-Cter in ubiquitin); alternate linkage. Tyr6 carries the phosphotyrosine modification. Residue Ser9 is modified to Phosphoserine. Tyr14 carries the post-translational modification Phosphotyrosine; by ABL1. Position 25 is a phosphotyrosine (Tyr25). Residues Lys26, Lys30, Lys39, Lys47, and Lys57 each participate in a glycyl lysine isopeptide (Lys-Gly) (interchain with G-Cter in ubiquitin) cross-link. Residues 82-94 (DGIWKASFTTFTV) are interaction with CAVIN3. Positions 105–125 (SLVGIPVALIWGIYFAILSFL) form an intramembrane region, helical. At 126-178 (YIWAVVPCIKSFLIKIQCISRIYSICIHTFCDPLYEAIGKIFSNIRISMQKEI) the chain is on the cytoplasmic side. Positions 131–142 (VPCIKSFLIKIQ) are interacts with SPRY1, SPRY2, SPRY3 and SPRY4. S-palmitoyl cysteine attachment occurs at residues Cys133, Cys143, and Cys156. Residues 149 to 160 (SICIHTFCDPLY) form an interacts with SPRY1, SPRY2, and SPRY4 region. Residues 167-178 (FSNIRISMQKEI) are interacts with SPRY1, SPRY2, SPRY3 and SPRY4.

This sequence belongs to the caveolin family. In terms of assembly, homooligomer. Interacts with GLIPR2. Interacts with NOSTRIN. Interacts with SNAP25 and STX1A. Interacts (via the N-terminus) with DPP4; the interaction is direct. Interacts with CTNNB1, CDH1 and JUP. Interacts with PACSIN2; this interaction induces membrane tubulation. Interacts with SLC7A9. Interacts with BMX and BTK. Interacts with TGFBR1. Interacts with CAVIN3 (via leucine-zipper domain) in a cholesterol-sensitive manner. Interacts with CAVIN1. Interacts with EHD2 in a cholesterol-dependent manner. Forms a ternary complex with UBXN6 and VCP; mediates CAV1 targeting to lysosomes for degradation. Interacts with ABCG1; this interaction regulates ABCG1-mediated cholesterol efflux. Interacts with NEU3; this interaction enhances NEU3 sialidase activity within caveola. Interacts (via C-terminus) with SPRY1, SPRY2 (via C-terminus), SPRY3, and SPRY4. Interacts with IGFBP5; this interaction allows trafficking of IGFBP5 from the plasma membrane to the nucleus. In terms of processing, phosphorylated at Tyr-14 by ABL1 in response to oxidative stress. Ubiquitinated. Undergo monoubiquitination and multi- and/or polyubiquitination. Monoubiquitination of N-terminal lysines promotes integration in a ternary complex with UBXN6 and VCP which promotes oligomeric CAV1 targeting to lysosomes for degradation. Ubiquitinated by ZNRF1; leading to degradation and modulation of the TLR4-mediated immune response.

The protein localises to the golgi apparatus membrane. Its subcellular location is the cell membrane. The protein resides in the membrane. It localises to the caveola. It is found in the membrane raft. In terms of biological role, may act as a scaffolding protein within caveolar membranes. Forms a stable heterooligomeric complex with CAV2 that targets to lipid rafts and drives caveolae formation. Mediates the recruitment of CAVIN proteins (CAVIN1/2/3/4) to the caveolae. Interacts directly with G-protein alpha subunits and can functionally regulate their activity. Involved in the costimulatory signal essential for T-cell receptor (TCR)-mediated T-cell activation. Its binding to DPP4 induces T-cell proliferation and NF-kappa-B activation in a T-cell receptor/CD3-dependent manner. Recruits CTNNB1 to caveolar membranes and may regulate CTNNB1-mediated signaling through the Wnt pathway. Negatively regulates TGFB1-mediated activation of SMAD2/3 by mediating the internalization of TGFBR1 from membrane rafts leading to its subsequent degradation. Binds 20(S)-hydroxycholesterol (20(S)-OHC). This is Caveolin-1 (CAV1) from Atelerix albiventris (Middle-African hedgehog).